The primary structure comprises 125 residues: MKHYEVLFILKPTLTEEEVNAKLEFVKEVLTKNSAEIETVVPMGTRKLAYKIKKYERGTYFVIYFKAPTNLIAELERVLRITEEVIRFLIVKYENKKEIAAWEKLSHGIKQSKKEIKPLDAPEIQ.

Belongs to the bacterial ribosomal protein bS6 family.

Functionally, binds together with bS18 to 16S ribosomal RNA. The sequence is that of Small ribosomal subunit protein bS6 from Campylobacter jejuni (strain RM1221).